Here is a 150-residue protein sequence, read N- to C-terminus: Regulatory protein RecX (150 aa).

The protein belongs to the RecX family.

The protein localises to the cytoplasm. Modulates RecA activity. The protein is Regulatory protein RecX of Legionella pneumophila (strain Corby).